The sequence spans 474 residues: MGVRIYNTATRQVEEFVTYVPKLARGYVCGITPYDHVHVGHGRVYVFFDMFRRYLEARGYEVRLVINFTDIDDKIINKAREEFGHDAYKRWKEVPERYIAEFFEMSNKLFIKPAHAYPRVTENVNEMVAWISTLVEKGYAYVAPDGSVYFEVGKVPNYGVLSRQKIEELIAGARVEPEPGKKNPLDFALWKSWTPGEPWWNSPWCPGRPGWHLECVVMSTKYLGAPFDFHGGGADLIFPHHENEIAIAKAYYGLDNFAKYWIHVGYLTVRGEKMSKSLGNVITLREVLSKYSGEALRLAYAMSHYRKPMEFSFELLDQAEEMVKTLYTAYDELSQAVADASDEDKEKLEYGKYIESFYAALEDDFSTPQAAQQLYGLARYIISTVLHRIDKASRQTAIDVLTQYVKMADILGVLERREIPKEVEEVIKAVVEARARLRREKMYQLADYLRERLAGIGVELHDFGQRTYYTYKRR.

C29 is a Zn(2+) binding site. The short motif at 31–41 is the 'HIGH' region element; that stretch reads ITPYDHVHVGH. The Zn(2+) site is built by C215, H240, and E244. A 'KMSKS' region motif is present at residues 273–277; the sequence is KMSKS. K276 serves as a coordination point for ATP.

The protein belongs to the class-I aminoacyl-tRNA synthetase family. Requires Zn(2+) as cofactor.

It is found in the cytoplasm. It carries out the reaction tRNA(Cys) + L-cysteine + ATP = L-cysteinyl-tRNA(Cys) + AMP + diphosphate. The protein is Cysteine--tRNA ligase of Pyrobaculum aerophilum (strain ATCC 51768 / DSM 7523 / JCM 9630 / CIP 104966 / NBRC 100827 / IM2).